Here is a 396-residue protein sequence, read N- to C-terminus: Chalcone synthase A (396 aa).

Residue C170 is part of the active site.

Belongs to the thiolase-like superfamily. Chalcone/stilbene synthases family.

The catalysed reaction is (E)-4-coumaroyl-CoA + 3 malonyl-CoA + 3 H(+) = 2',4,4',6'-tetrahydroxychalcone + 3 CO2 + 4 CoA. Its pathway is secondary metabolite biosynthesis; flavonoid biosynthesis. Functionally, the primary product of this enzyme is 4,2',4',6'-tetrahydroxychalcone (also termed naringenin-chalcone or chalcone) which can under specific conditions spontaneously isomerize into naringenin. This chain is Chalcone synthase A (CHSA), found in Ipomoea purpurea (Common morning glory).